A 338-amino-acid polypeptide reads, in one-letter code: tRNA N6-adenosine threonylcarbamoyltransferase (338 aa).

Fe cation-binding residues include H111 and H115. Residues L134–G138, D167, G180, and N275 each bind substrate. D304 contacts Fe cation.

The protein belongs to the KAE1 / TsaD family. The cofactor is Fe(2+).

Its subcellular location is the cytoplasm. It catalyses the reaction L-threonylcarbamoyladenylate + adenosine(37) in tRNA = N(6)-L-threonylcarbamoyladenosine(37) in tRNA + AMP + H(+). Required for the formation of a threonylcarbamoyl group on adenosine at position 37 (t(6)A37) in tRNAs that read codons beginning with adenine. Is involved in the transfer of the threonylcarbamoyl moiety of threonylcarbamoyl-AMP (TC-AMP) to the N6 group of A37, together with TsaE and TsaB. TsaD likely plays a direct catalytic role in this reaction. The protein is tRNA N6-adenosine threonylcarbamoyltransferase of Leptospira borgpetersenii serovar Hardjo-bovis (strain JB197).